Consider the following 329-residue polypeptide: tRNA (cytidine(32)/guanosine(34)-2'-O)-methyltransferase (329 aa).

5 residues coordinate S-adenosyl-L-methionine: glycine 53, tryptophan 55, aspartate 75, aspartate 91, and aspartate 116. Catalysis depends on lysine 156, which acts as the Proton acceptor. The tract at residues 221 to 240 (DFNQLDGPTRIIVPFVTCGD) is required for binding to WDR6. Position 271 is a phosphoserine (serine 271).

This sequence belongs to the class I-like SAM-binding methyltransferase superfamily. RNA methyltransferase RlmE family. TRM7 subfamily. Interacts with WDR6; the interaction is direct, and required for 2'-O-methylation of position 34 in substrate tRNAs. As to expression, found in fetal brain, lung, liver and kidney. Widely expressed in adult tissue; with high expression in heart and liver, lower expression in skeletal muscle, kidney, and pancreas and also lowly expressed in brain and lung. In the adult brain, expressed in amygdala, caudate nucleus, corpus callosum, hippocampus and thalamus.

Its subcellular location is the cytoplasm. It is found in the nucleus. It catalyses the reaction cytidine(32)/guanosine(34) in tRNA + 2 S-adenosyl-L-methionine = 2'-O-methylcytidine(32)/2'-O-methylguanosine(34) in tRNA + 2 S-adenosyl-L-homocysteine + 2 H(+). With respect to regulation, inhibited by 2,6-diaminopurine (DAP); inhibition promotes UGA stop-codon readthrough during translation by misincorporation of tRNA(Trp) in the nascent polypeptide. Its function is as follows. Methylates the 2'-O-ribose of nucleotides at positions 32 and 34 of the tRNA anticodon loop of substrate tRNAs. Requisite for faithful cytoplasmic translation. Requires THADA for methylation of the nucleotide at position 32 of the anticodon loop of substrate tRNAs. Requires WDR6 for methylation of the nucleotide at position 34 of the anticodon loop of substrate tRNAs. Promotes translation efficiency of the UUU codon. Plays a role in neurogenesis. Required for expression of genes involved in neurogenesis, mitochondrial translation and energy generation, and lipid biosynthesis. Requisite for RNA-mediated gene silencing. May modify position 32 in tRNA(Arg(ACG)), tRNA(Arg(CCG)), tRNA(Arg(UCG)), tRNA(Cys(GCA)), tRNA(Cys(ACA)), tRNA(Gln(CUG)), tRNA(Gln(UUG)), tRNA(Gly(CCC)), tRNA(Leu(CAG))/tRNA(Leu(CAA)), tRNA(Leu(A/IAG)), tRNA(Leu(UAG)), tRNA(Phe(GAA)), tRNA(Pro(AGG))/tRNA(Pro(CGG))/tRNA(Pro(UGG)) and tRNA(Trp(CCA)), and position 34 in tRNA(Phe(GAA)), tRNA(Leu(CAA)), tRNA(Sec(UCA)), and tRNA(Trp(CCA)). This is tRNA (cytidine(32)/guanosine(34)-2'-O)-methyltransferase from Homo sapiens (Human).